We begin with the raw amino-acid sequence, 418 residues long: Tyrosine--tRNA ligase (418 aa).

Tyrosine 34 provides a ligand contact to L-tyrosine. Residues 39 to 48 carry the 'HIGH' region motif; that stretch reads PTADSLHLGH. L-tyrosine-binding residues include tyrosine 169 and glutamine 173. The 'KMSKS' region signature appears at 229–233; sequence KFGKS. Lysine 232 is an ATP binding site. The S4 RNA-binding domain occupies 352-418; it reads NNIVELLVSS…GKKKYFVLTY (67 aa).

This sequence belongs to the class-I aminoacyl-tRNA synthetase family. TyrS type 1 subfamily. As to quaternary structure, homodimer.

The protein localises to the cytoplasm. The enzyme catalyses tRNA(Tyr) + L-tyrosine + ATP = L-tyrosyl-tRNA(Tyr) + AMP + diphosphate + H(+). Functionally, catalyzes the attachment of tyrosine to tRNA(Tyr) in a two-step reaction: tyrosine is first activated by ATP to form Tyr-AMP and then transferred to the acceptor end of tRNA(Tyr). The protein is Tyrosine--tRNA ligase of Streptococcus pneumoniae (strain 70585).